A 181-amino-acid polypeptide reads, in one-letter code: Cytochrome b6-f complex iron-sulfur subunit (181 aa).

Positions 1 to 35 (MAQTGNFKSPARMSSLGQGAAPASSGAVTGGKPRE) are disordered. A run of 2 helical transmembrane segments spans residues 53–73 (VGGV…KYII) and 114–134 (GGAL…VNWV). The Rieske domain occupies 85–178 (LTVGKASEVP…ARIEGDSIII (94 aa)). Positions 124, 126, 142, and 145 each coordinate [2Fe-2S] cluster. A disulfide bond links cysteine 129 and cysteine 144.

The protein belongs to the Rieske iron-sulfur protein family. The cofactor is [2Fe-2S] cluster.

It localises to the cell inner membrane. The catalysed reaction is 2 oxidized [plastocyanin] + a plastoquinol + 2 H(+)(in) = 2 reduced [plastocyanin] + a plastoquinone + 4 H(+)(out). Functionally, component of the green S-bacteria bc-complex which consists of the Rieske protein and cytochrome b subunit and which appears to lack a cytochrome c1-equivalent. This complex has a comparatively low redox potential. This Chlorobaculum thiosulfatiphilum (Chlorobium limicola f.sp. thiosulfatophilum) protein is Cytochrome b6-f complex iron-sulfur subunit (petC).